The sequence spans 242 residues: ADP-dependent L-serine kinase SerK (242 aa).

E30 is a catalytic residue. ADP-binding residues include S43, I49, W51, and K52. V68 is an O-phospho-L-serine binding site. ADP contacts are provided by D69, G70, H71, H72, and R73. Residue D69 participates in Mg(2+) binding. Residues G70, H71, and H72 each coordinate O-phospho-L-serine. O-phospho-L-serine contacts are provided by W102, K221, T223, and H225.

It belongs to the SerK family. Requires Mg(2+) as cofactor.

The catalysed reaction is L-serine + ADP = O-phospho-L-serine + AMP + H(+). Its pathway is amino-acid biosynthesis; L-cysteine biosynthesis; L-cysteine from L-serine: step 1/2. Functionally, free serine kinase that uses ADP to phosphorylate L-serine to yield O-phospho-L-serine and AMP. The protein is ADP-dependent L-serine kinase SerK of Thermococcus kodakarensis (strain ATCC BAA-918 / JCM 12380 / KOD1) (Pyrococcus kodakaraensis (strain KOD1)).